A 211-amino-acid chain; its full sequence is Uracil phosphoribosyltransferase (211 aa).

5-phospho-alpha-D-ribose 1-diphosphate-binding positions include R79, R104, and 131–139 (DPMLATGGS). Uracil-binding positions include I196 and 201-203 (GDA). D202 contacts 5-phospho-alpha-D-ribose 1-diphosphate.

Belongs to the UPRTase family. Mg(2+) serves as cofactor.

It catalyses the reaction UMP + diphosphate = 5-phospho-alpha-D-ribose 1-diphosphate + uracil. The protein operates within pyrimidine metabolism; UMP biosynthesis via salvage pathway; UMP from uracil: step 1/1. Its activity is regulated as follows. Allosterically activated by GTP. In terms of biological role, catalyzes the conversion of uracil and 5-phospho-alpha-D-ribose 1-diphosphate (PRPP) to UMP and diphosphate. This is Uracil phosphoribosyltransferase from Lactococcus lactis subsp. lactis (strain IL1403) (Streptococcus lactis).